A 696-amino-acid polypeptide reads, in one-letter code: MESEYVLCNWKDQLWPAKVLSRSETSSNSKRKKAFSLEVQILSLDEKIKLDSTETKILNKSQIEAIAASLGLQSEDSAPPTEETAYGRSLKVALGILNERTNLSQASTSDEEEITMLSQNVPQKQSDSPPHKKYRKDEGDLPGCLEERENSACLLASSESDDSLYDDKSQAPTMVDTIPSEVETKSLQNSSWCETFPSLSEDNDEKENKNKIDISAVMSVHSAVKEESACVKDEKFAPPLSPLSSDMLIMPKALKEESEDTCLETLAVPSECSAFSENIEDPGEGPSNPCLDTSQNQPSMESEMGAAACPGSCSRECEVSFSASNPVWDYSHLMSSERNFQRLDFEELEEEGQASDKSLLPSRINLSLLDDDEEDEELPRFILHYETHPFETGMIVWFKYQKYPFWPAVIKSIRRKERKASVLFVEANMNSEKKGIRVNFRRLKKFDCKEKQMLVDKAREDYSESIDWCISLICDYRVRIGCGSFTGSLLEYYAADISYPVRKETKQDTFRNKFPKLHNEDAREPMAVTSQTKKMSFQKILPDRMKAARDRANKNLVDFIVNAKGTENHLLAIVNGTKGSRWLKSFLNANRFTPCIETYFEDEDQLDEVVKYLQEVCNQIDQIMPTWIKDDKIKFILEVLLPEAIICSISAVDGLDYEAAEAKYLKGPCLGYRERELFDAKIIYEKRRKAPTNEAH.

Polar residues-rich tracts occupy residues 119–128 (QNVPQKQSDS) and 290–300 (CLDTSQNQPSM). Disordered stretches follow at residues 119–143 (QNVP…DLPG) and 278–303 (NIED…MESE). Residue Ser-128 is modified to Phosphoserine. The 62-residue stretch at 392–453 (TGMIVWFKYQ…KKFDCKEKQM (62 aa)) folds into the PWWP domain.

The protein belongs to the PWWP3A family.

The protein is PWWP domain-containing DNA repair factor 3B of Homo sapiens (Human).